A 178-amino-acid polypeptide reads, in one-letter code: Interleukin-10 (178 aa).

Positions 1–18 (MHSSALLCCLVLLTGVRA) are cleaved as a signal peptide. 2 cysteine pairs are disulfide-bonded: Cys-30-Cys-126 and Cys-80-Cys-132. Asn-134 carries an N-linked (GlcNAc...) asparagine glycan.

The protein belongs to the IL-10 family. As to quaternary structure, homodimer. Interacts with IL10RA and IL10RB.

It is found in the secreted. Functionally, major immune regulatory cytokine that acts on many cells of the immune system where it has profound anti-inflammatory functions, limiting excessive tissue disruption caused by inflammation. Mechanistically, IL10 binds to its heterotetrameric receptor comprising IL10RA and IL10RB leading to JAK1 and STAT2-mediated phosphorylation of STAT3. In turn, STAT3 translocates to the nucleus where it drives expression of anti-inflammatory mediators. Targets antigen-presenting cells (APCs) such as macrophages and monocytes and inhibits their release of pro-inflammatory cytokines including granulocyte-macrophage colony-stimulating factor /GM-CSF, granulocyte colony-stimulating factor/G-CSF, IL-1 alpha, IL-1 beta, IL-6, IL-8 and TNF-alpha. Also interferes with antigen presentation by reducing the expression of MHC-class II and co-stimulatory molecules, thereby inhibiting their ability to induce T cell activation. In addition, controls the inflammatory response of macrophages by reprogramming essential metabolic pathways including mTOR signaling. The chain is Interleukin-10 (IL10) from Macaca nemestrina (Pig-tailed macaque).